Here is a 424-residue protein sequence, read N- to C-terminus: Nicotinate phosphoribosyltransferase (424 aa).

Residue histidine 242 is modified to Phosphohistidine; by autocatalysis.

This sequence belongs to the NAPRTase family. In terms of processing, transiently phosphorylated on a His residue during the reaction cycle. Phosphorylation strongly increases the affinity for substrates and increases the rate of nicotinate D-ribonucleotide production. Dephosphorylation regenerates the low-affinity form of the enzyme, leading to product release.

The catalysed reaction is nicotinate + 5-phospho-alpha-D-ribose 1-diphosphate + ATP + H2O = nicotinate beta-D-ribonucleotide + ADP + phosphate + diphosphate. It functions in the pathway cofactor biosynthesis; NAD(+) biosynthesis; nicotinate D-ribonucleotide from nicotinate: step 1/1. Its function is as follows. Catalyzes the synthesis of beta-nicotinate D-ribonucleotide from nicotinate and 5-phospho-D-ribose 1-phosphate at the expense of ATP. This chain is Nicotinate phosphoribosyltransferase, found in Bartonella bacilliformis (strain ATCC 35685 / KC583 / Herrer 020/F12,63).